The following is a 62-amino-acid chain: Small ribosomal subunit protein eS27 (62 aa).

Zn(2+)-binding residues include Cys17, Cys20, Cys36, and Cys39. A C4-type zinc finger spans residues Cys17–Cys39.

The protein belongs to the eukaryotic ribosomal protein eS27 family. As to quaternary structure, part of the 30S ribosomal subunit. Zn(2+) serves as cofactor.

This Methanoregula boonei (strain DSM 21154 / JCM 14090 / 6A8) protein is Small ribosomal subunit protein eS27.